A 37-amino-acid chain; its full sequence is Albumin-2 (37 aa).

A Hemopexin repeat occupies 6–37 (IANFSVLNXEAYLFINDKYVLLDYAPGTXNDK).

As to quaternary structure, dimer. In terms of tissue distribution, expressed in seeds (at protein level).

The protein resides in the cytoplasm. It is found in the cytosol. Its function is as follows. Binds hemin and thiamine. This is Albumin-2 from Lens culinaris (Lentil).